The following is a 363-amino-acid chain: Chorismate synthase (363 aa).

Residue Arg48 coordinates NADP(+). FMN-binding positions include 125–127 (RSS), 238–239 (NA), Gly278, 293–297 (KPTAS), and Arg319.

The protein belongs to the chorismate synthase family. As to quaternary structure, homotetramer. FMNH2 is required as a cofactor.

It carries out the reaction 5-O-(1-carboxyvinyl)-3-phosphoshikimate = chorismate + phosphate. Its pathway is metabolic intermediate biosynthesis; chorismate biosynthesis; chorismate from D-erythrose 4-phosphate and phosphoenolpyruvate: step 7/7. Its function is as follows. Catalyzes the anti-1,4-elimination of the C-3 phosphate and the C-6 proR hydrogen from 5-enolpyruvylshikimate-3-phosphate (EPSP) to yield chorismate, which is the branch point compound that serves as the starting substrate for the three terminal pathways of aromatic amino acid biosynthesis. This reaction introduces a second double bond into the aromatic ring system. This is Chorismate synthase from Acinetobacter baumannii (strain ACICU).